A 416-amino-acid chain; its full sequence is Phosphoglycerate kinase (416 aa).

(2R)-3-phosphoglycerate contacts are provided by valine 23, aspartate 24, phenylalanine 25, asparagine 26, glutamine 38, arginine 39, serine 62, histidine 63, glycine 65, arginine 66, leucine 121, arginine 122, histidine 168, and arginine 169. An ADP-binding site is contributed by glycine 212. A CDP-binding site is contributed by glycine 212. AMP-binding residues include alanine 213 and lysine 214. ATP is bound at residue alanine 213. A Mg(2+)-binding site is contributed by alanine 213. Aspartate 217 lines the CDP pocket. Aspartate 217 contacts Mg(2+). Residue lysine 218 participates in AMP binding. Lysine 218 contributes to the ATP binding site. Position 236 (glycine 236) interacts with ADP. Glycine 236 contributes to the CDP binding site. Residues glycine 237 and glycine 311 each coordinate AMP. 2 residues coordinate ATP: glycine 237 and glycine 311. Positions 336 and 341 each coordinate CDP. Phenylalanine 341 lines the ADP pocket. Glutamate 342 serves as a coordination point for AMP. ATP is bound by residues glutamate 342, aspartate 373, and threonine 374. Aspartate 373 provides a ligand contact to Mg(2+).

It belongs to the phosphoglycerate kinase family. In terms of assembly, monomer. Mg(2+) is required as a cofactor.

The protein resides in the cytoplasm. It is found in the mitochondrion. It carries out the reaction (2R)-3-phosphoglycerate + ATP = (2R)-3-phospho-glyceroyl phosphate + ADP. The protein operates within carbohydrate degradation; glycolysis; pyruvate from D-glyceraldehyde 3-phosphate: step 2/5. Functionally, catalyzes one of the two ATP producing reactions in the glycolytic pathway via the reversible conversion of 1,3-diphosphoglycerate to 3-phosphoglycerate. Both L- and D- forms of purine and pyrimidine nucleotides can be used as substrates, but the activity is much lower on pyrimidines. Negatively regulates the biosynthesis of acetyl-CoA from pyruvate in the mitochondrion. This chain is Phosphoglycerate kinase (PGK1), found in Debaryomyces hansenii (strain ATCC 36239 / CBS 767 / BCRC 21394 / JCM 1990 / NBRC 0083 / IGC 2968) (Yeast).